The primary structure comprises 634 residues: Probable potassium transport system protein Kup (634 aa).

The next 12 helical transmembrane spans lie at 21–41 (LVIG…LYTL), 58–78 (VLGI…LKYV), 110–130 (MYVV…DGVI), 152–172 (PFVV…QRFG), 179–199 (AFGP…VYNM), 223–243 (WHAV…EALY), 258–278 (WQFV…ALML), 296–316 (ALYP…QALI), 348–368 (IYVP…VIGF), 377–397 (AYGV…IIYA), 403–423 (VPAP…CAFF), and 427–447 (IIKF…LFTL).

Belongs to the HAK/KUP transporter (TC 2.A.72) family.

It is found in the cell inner membrane. The enzyme catalyses K(+)(in) + H(+)(in) = K(+)(out) + H(+)(out). In terms of biological role, transport of potassium into the cell. Likely operates as a K(+):H(+) symporter. The protein is Probable potassium transport system protein Kup of Xanthomonas euvesicatoria pv. vesicatoria (strain 85-10) (Xanthomonas campestris pv. vesicatoria).